The primary structure comprises 1023 residues: Sodium/potassium-transporting ATPase subunit alpha-1 (1023 aa).

The propeptide occupies 1-5 (MGKGV). Residues 1–11 (MGKGVGRDKYE) show a composition bias toward basic and acidic residues. Residues 1-39 (MGKGVGRDKYEPAAVSEQGDKKGKKGKKDRDMDELKKEV) form a disordered region. At 6-87 (GRDKYEPAAV…NALTPPPTTP (82 aa)) the chain is on the cytoplasmic side. Residue lysine 9 is modified to N6-acetyllysine. Residue tyrosine 10 is modified to Phosphotyrosine. Serine 16 carries the post-translational modification Phosphoserine. Lysine 21 bears the N6-acetyllysine mark. Positions 28-39 (KDRDMDELKKEV) are enriched in basic and acidic residues. Phosphoserine occurs at positions 40 and 47. Residues 82–84 (PPP) form a phosphoinositide-3 kinase binding region. Residues 88 to 108 (EWIKFCRQLFGGFSMLLWIGA) form a helical membrane-spanning segment. Residues 109 to 131 (ILCFLAYSIQAATEEEPQNDNLY) lie on the Extracellular side of the membrane. The helical transmembrane segment at 132–152 (LGVVLSAVVIITGCFSYYQEA) threads the bilayer. Residues 153–288 (KSSKIMESFK…GGQTPIAAEI (136 aa)) are Cytoplasmic-facing. Residues 216-235 (SSLTGESEPQTRSPDFTNEN) are disordered. The residue at position 228 (serine 228) is a Phosphoserine. Phosphotyrosine is present on tyrosine 260. A helical membrane pass occupies residues 289–308 (EHFIHIITGVAVFLGVSFFI). Residues 309–320 (LSLILEYTWLEA) lie on the Extracellular side of the membrane. Residues 321–338 (VIFLIGIIVANVPEGLLA) traverse the membrane as a helical segment. Residues 339–772 (TVTVCLTLTA…EEGRLIFDNL (434 aa)) lie on the Cytoplasmic side of the membrane. The active-site 4-aspartylphosphate intermediate is the aspartate 376. A phosphoserine mark is found at serine 452 and serine 484. An ATP-binding site is contributed by lysine 487. Phosphotyrosine is present on tyrosine 542. The tract at residues 596–717 (RAAVPDAVGK…QGAIVAVTGD (122 aa)) is mediates interaction with SCN7A. N6-succinyllysine is present on lysine 661. Phosphoserine is present on residues serine 668 and serine 675. Mg(2+)-binding residues include aspartate 717 and aspartate 721. Residues 773–792 (KKSIAYTLTSNIPEITPFLI) traverse the membrane as a helical segment. At 793–802 (FIIANIPLPL) the chain is on the extracellular side. A helical membrane pass occupies residues 803 to 823 (GTVTILCIDLGTDMVPAISLA). Over 824–843 (YEQAESDIMKRQPRNPKTDK) the chain is Cytoplasmic. The helical transmembrane segment at 844-866 (LVNERLISMAYGQIGMIQALGGF) threads the bilayer. At 867 to 918 (FTYFVILAENGFLPIHLLGLRVDWDDRWINDVEDSYGQQWTYEQRKIVEFTC) the chain is on the extracellular side. Residues 919–938 (HTAFFVSIVVVQWADLVICK) traverse the membrane as a helical segment. The Cytoplasmic portion of the chain corresponds to 939–951 (TRRNSVFQQGMKN). Serine 943 is modified (phosphoserine; by PKA). Residues 952–970 (KILIFGLFEETALAAFLSY) form a helical membrane-spanning segment. Residues 971–985 (CPGMGVALRMYPLKP) lie on the Extracellular side of the membrane. The chain crosses the membrane as a helical span at residues 986-1006 (TWWFCAFPYSLLIFVYDEVRK). Topologically, residues 1007–1023 (LIIRRRPGGWVEKETYY) are cytoplasmic.

Belongs to the cation transport ATPase (P-type) (TC 3.A.3) family. Type IIC subfamily. In terms of assembly, the sodium/potassium-transporting ATPase is composed of a catalytic alpha subunit, an auxiliary non-catalytic beta subunit and an additional regulatory subunit. Interacts with regulatory subunit FXYD1. Interacts with regulatory subunit FXYD3. Interacts with SIK1. Binds the HLA class II histocompatibility antigen DR1. Interacts with SLC35G1 and STIM1. Interacts with CLN3; this interaction regulates the sodium/potassium-transporting ATPase complex localization at the plasma membrane. Interacts with SCN7A; activates ATP1A1 P-type sodium:potassium-exchanging transporter activity which indirectly signals to nearby neurons to regulate sodium homeostasis. In terms of processing, phosphorylation on Tyr-10 modulates pumping activity. Phosphorylation of Ser-943 by PKA modulates the response of ATP1A1 to PKC. Dephosphorylation by protein phosphatase 2A (PP2A) following increases in intracellular sodium, leading to increase catalytic activity.

The protein resides in the cell membrane. It is found in the basolateral cell membrane. Its subcellular location is the sarcolemma. The protein localises to the cell projection. It localises to the axon. The protein resides in the melanosome. The catalysed reaction is K(+)(out) + Na(+)(in) + ATP + H2O = K(+)(in) + Na(+)(out) + ADP + phosphate + H(+). This is the catalytic component of the active enzyme, which catalyzes the hydrolysis of ATP coupled with the exchange of sodium and potassium ions across the plasma membrane. This action creates the electrochemical gradient of sodium and potassium ions, providing the energy for active transport of various nutrients. Could also be part of an osmosensory signaling pathway that senses body-fluid sodium levels and controls salt intake behavior as well as voluntary water intake to regulate sodium homeostasis. In Homo sapiens (Human), this protein is Sodium/potassium-transporting ATPase subunit alpha-1 (ATP1A1).